We begin with the raw amino-acid sequence, 225 residues long: Proteoglycan 3 (225 aa).

A signal peptide spans 1 to 17 (MQCLLLLPFLLLGTVSA). A C-type lectin domain is found at 107–224 (CKICRYLLVR…CDKQLPFVCS (118 aa)). Intrachain disulfides connect C128/C223 and C200/C215.

In terms of tissue distribution, expressed in bone marrow. Not detected in placenta.

It localises to the cytoplasmic granule. Functionally, possesses similar cytotoxic and cytostimulatory activities to PRG2/MBP. In vitro, stimulates neutrophil superoxide production and IL8 release, and histamine and leukotriene C4 release from basophils. The sequence is that of Proteoglycan 3 from Homo sapiens (Human).